The primary structure comprises 294 residues: Indole-3-glycerol phosphate synthase (294 aa).

Belongs to the TrpC family.

The catalysed reaction is 1-(2-carboxyphenylamino)-1-deoxy-D-ribulose 5-phosphate + H(+) = (1S,2R)-1-C-(indol-3-yl)glycerol 3-phosphate + CO2 + H2O. Its pathway is amino-acid biosynthesis; L-tryptophan biosynthesis; L-tryptophan from chorismate: step 4/5. This chain is Indole-3-glycerol phosphate synthase, found in Synechococcus sp. (strain WH7803).